Consider the following 48-residue polypeptide: Large ribosomal subunit protein bL32 (48 aa).

Residues 1–20 (MAVPKRRVSKTRAAKRRTHY) show a composition bias toward basic residues. The tract at residues 1 to 48 (MAVPKRRVSKTRAAKRRTHYKVSLPMPIKDKDGSYKMPHRANPTTKEY) is disordered.

Belongs to the bacterial ribosomal protein bL32 family.

The protein is Large ribosomal subunit protein bL32 (rpmF) of Campylobacter jejuni subsp. jejuni serotype O:2 (strain ATCC 700819 / NCTC 11168).